Reading from the N-terminus, the 482-residue chain is Putative dipeptidase NECHADRAFT_87110 (482 aa).

The span at 1 to 21 (MADTQTPNLQNTAEGDANTSA) shows a compositional bias: polar residues. Positions 1–24 (MADTQTPNLQNTAEGDANTSAENE) are disordered. An N-linked (GlcNAc...) asparagine glycan is attached at Asn-18. The helical transmembrane segment at 41 to 61 (WLRYPFLVAGIALFLGPFSFF) threads the bilayer. Positions 90, 92, and 201 each coordinate Zn(2+). A disulfide bridge connects residues Cys-141 and Cys-230. A substrate-binding site is contributed by His-228. The Zn(2+) site is built by His-272 and His-293. The substrate site is built by Arg-304 and Asp-364.

Belongs to the metallo-dependent hydrolases superfamily. Peptidase M19 family. The cofactor is Zn(2+).

It localises to the membrane. It catalyses the reaction an L-aminoacyl-L-amino acid + H2O = 2 an L-alpha-amino acid. Its function is as follows. Hydrolyzes a wide range of dipeptides. This Fusarium vanettenii (strain ATCC MYA-4622 / CBS 123669 / FGSC 9596 / NRRL 45880 / 77-13-4) (Fusarium solani subsp. pisi) protein is Putative dipeptidase NECHADRAFT_87110.